Reading from the N-terminus, the 293-residue chain is Formamidopyrimidine-DNA glycosylase (293 aa).

Pro2 serves as the catalytic Schiff-base intermediate with DNA. The Proton donor role is filled by Glu3. Residue Lys58 is the Proton donor; for beta-elimination activity of the active site. His104, Arg123, and Lys166 together coordinate DNA. Residues 257–293 (AVYDRESEPCRTKGCGGVVKRFVQNGRSTFCCPKCQK) form an FPG-type zinc finger. Arg283 acts as the Proton donor; for delta-elimination activity in catalysis.

This sequence belongs to the FPG family. In terms of assembly, monomer. Zn(2+) serves as cofactor.

It catalyses the reaction Hydrolysis of DNA containing ring-opened 7-methylguanine residues, releasing 2,6-diamino-4-hydroxy-5-(N-methyl)formamidopyrimidine.. It carries out the reaction 2'-deoxyribonucleotide-(2'-deoxyribose 5'-phosphate)-2'-deoxyribonucleotide-DNA = a 3'-end 2'-deoxyribonucleotide-(2,3-dehydro-2,3-deoxyribose 5'-phosphate)-DNA + a 5'-end 5'-phospho-2'-deoxyribonucleoside-DNA + H(+). Functionally, involved in base excision repair of DNA damaged by oxidation or by mutagenic agents. Acts as a DNA glycosylase that recognizes and removes damaged bases. Has a preference for oxidized purines, such as 7,8-dihydro-8-oxoguanine (8-oxoG). Has AP (apurinic/apyrimidinic) lyase activity and introduces nicks in the DNA strand. Cleaves the DNA backbone by beta-delta elimination to generate a single-strand break at the site of the removed base with both 3'- and 5'-phosphates. The sequence is that of Formamidopyrimidine-DNA glycosylase from Rhodopseudomonas palustris (strain BisA53).